The primary structure comprises 280 residues: MIKINSTIECSNSAPFVLFGGINVLESEDLALTACAEYVRVTQKLGIPYVFKASFDKANRSSIHSYRGPGMEEGLRIFEKVKAEFGVPIITDVHEIYQTAPVAEVVDVLQLPAFLARQTDLVVALAKTGKPVNIKKPQFLSPSQMQNIVHKFKEAGNDQLILCDRGTCMGYDNLIVDMLGFGVMKRTCQDLPIIFDVTHALQNRDPSGAASGGRREQVVELARAGMGVGLAGLFLEAHPNPDQAKCDGPSALPLDKLEPFLAQIKALDDLVKSFPQLTIA.

The protein belongs to the KdsA family.

It localises to the cytoplasm. The catalysed reaction is D-arabinose 5-phosphate + phosphoenolpyruvate + H2O = 3-deoxy-alpha-D-manno-2-octulosonate-8-phosphate + phosphate. Its pathway is carbohydrate biosynthesis; 3-deoxy-D-manno-octulosonate biosynthesis; 3-deoxy-D-manno-octulosonate from D-ribulose 5-phosphate: step 2/3. The protein operates within bacterial outer membrane biogenesis; lipopolysaccharide biosynthesis. The polypeptide is 2-dehydro-3-deoxyphosphooctonate aldolase 2 (kdsA2) (Pseudomonas putida (strain ATCC 47054 / DSM 6125 / CFBP 8728 / NCIMB 11950 / KT2440)).